We begin with the raw amino-acid sequence, 92 residues long: Acylphosphatase (92 aa).

An Acylphosphatase-like domain is found at 5-90 (TWRLVAHGRV…GEFAGFEFRP (86 aa)). Active-site residues include Arg20 and Asn38.

The protein belongs to the acylphosphatase family.

It carries out the reaction an acyl phosphate + H2O = a carboxylate + phosphate + H(+). The sequence is that of Acylphosphatase (acyP) from Cupriavidus necator (strain ATCC 17699 / DSM 428 / KCTC 22496 / NCIMB 10442 / H16 / Stanier 337) (Ralstonia eutropha).